We begin with the raw amino-acid sequence, 119 residues long: Holo-[acyl-carrier-protein] synthase (119 aa).

Positions 8 and 58 each coordinate Mg(2+).

It belongs to the P-Pant transferase superfamily. AcpS family. Mg(2+) serves as cofactor.

It is found in the cytoplasm. The catalysed reaction is apo-[ACP] + CoA = holo-[ACP] + adenosine 3',5'-bisphosphate + H(+). Its function is as follows. Transfers the 4'-phosphopantetheine moiety from coenzyme A to a Ser of acyl-carrier-protein. This chain is Holo-[acyl-carrier-protein] synthase, found in Halalkalibacterium halodurans (strain ATCC BAA-125 / DSM 18197 / FERM 7344 / JCM 9153 / C-125) (Bacillus halodurans).